We begin with the raw amino-acid sequence, 244 residues long: Cell division protein ZapD (244 aa).

Belongs to the ZapD family. In terms of assembly, interacts with FtsZ.

The protein resides in the cytoplasm. Its function is as follows. Cell division factor that enhances FtsZ-ring assembly. Directly interacts with FtsZ and promotes bundling of FtsZ protofilaments, with a reduction in FtsZ GTPase activity. This Shewanella baltica (strain OS185) protein is Cell division protein ZapD.